Consider the following 212-residue polypeptide: Protein-L-isoaspartate O-methyltransferase (212 aa).

Residue serine 60 is part of the active site.

It belongs to the methyltransferase superfamily. L-isoaspartyl/D-aspartyl protein methyltransferase family.

The protein resides in the cytoplasm. The enzyme catalyses [protein]-L-isoaspartate + S-adenosyl-L-methionine = [protein]-L-isoaspartate alpha-methyl ester + S-adenosyl-L-homocysteine. Functionally, catalyzes the methyl esterification of L-isoaspartyl residues in peptides and proteins that result from spontaneous decomposition of normal L-aspartyl and L-asparaginyl residues. It plays a role in the repair and/or degradation of damaged proteins. The sequence is that of Protein-L-isoaspartate O-methyltransferase from Methanococcus maripaludis (strain DSM 14266 / JCM 13030 / NBRC 101832 / S2 / LL).